We begin with the raw amino-acid sequence, 144 residues long: Large ribosomal subunit protein eL27 (144 aa).

The KOW domain maps to 6-43 (IKPGRLVILLNGKYAGRKAVVIKTFDDATASKSRPYGH).

This sequence belongs to the eukaryotic ribosomal protein eL27 family.

In Dictyostelium discoideum (Social amoeba), this protein is Large ribosomal subunit protein eL27 (rpl27).